We begin with the raw amino-acid sequence, 422 residues long: MTVFFKTLRNHWKKTTAGLCLLTWGGHWLYGKHCDNLLRRAACQEAQVFGNQLIPPNAQVKKATVFLNPAACKGKARTLFEKNAAPILHLSGMDVTIVKTDYEGQAKKLLELMENTDVIIVAGGDGTLQEVVTGVLRRTDEATFSKIPIGFIPLGETSSLSHTLFAESGNKVQHITDATLAIVKGETVPLDVLQIKGEKEQPVFAMTGLRWGSFRDAGVKVSKYWYLGPLKIKAAHFFSTLKEWPQTHQASISYTGPTERPPNEPEETPVQRPSLYRRILRRLASYWAQPQDALSQEVSPEVWKDVQLSTIELSITTRNNQLDPTSKEDFLNICIEPDTISKGDFITIGSRKVRNPKLHVEGTECLQASQCTLLIPEGAGGSFSIDSEEYEAMPVEVKLLPRKLQFFCDPRKREQMLTSPTQ.

An N6-acetyllysine modification is found at Lys-6. The interval 15 to 31 (TTAGLCLLTWGGHWLYG) is hydrophobic. In terms of domain architecture, DAGKc spans 58–199 (AQVKKATVFL…LDVLQIKGEK (142 aa)). The interval 249-271 (QASISYTGPTERPPNEPEETPVQ) is disordered.

This sequence belongs to the AGK family. Component of the TIM22 complex, which core is composed of TIMM22, associated with TIMM10 (TIMM10A and/or TIMM10B), TIMM9, AGK and TIMM29. Interacts with SMIM26. Requires Mg(2+) as cofactor. Highly expressed in muscle, heart, kidney and brain.

Its subcellular location is the mitochondrion inner membrane. The protein resides in the mitochondrion intermembrane space. It catalyses the reaction a monoacylglycerol + ATP = a monoacyl-sn-glycero-3-phosphate + ADP + H(+). It carries out the reaction a 1,2-diacyl-sn-glycerol + ATP = a 1,2-diacyl-sn-glycero-3-phosphate + ADP + H(+). The catalysed reaction is an N-acylsphing-4-enine + ATP = an N-acylsphing-4-enine 1-phosphate + ADP + H(+). The enzyme catalyses 1-(9Z-octadecenoyl)-sn-glycerol + ATP = 1-(9Z-octadecenoyl)-sn-glycero-3-phosphate + ADP + H(+). It catalyses the reaction 1,2-di-(9Z-octadecenoyl)-sn-glycerol + ATP = 1,2-di-(9Z-octadecenoyl)-sn-glycero-3-phosphate + ADP + H(+). It carries out the reaction a 1-acyl-sn-glycerol + ATP = a 1-acyl-sn-glycero-3-phosphate + ADP + H(+). The catalysed reaction is 1-hexadecanoyl-sn-glycerol + ATP = 1-hexadecanoyl-sn-glycero-3-phosphate + ADP + H(+). The enzyme catalyses a 2-acylglycerol + ATP = a 2-acyl-sn-glycerol 3-phosphate + ADP + H(+). It catalyses the reaction 2-(5Z,8Z,11Z,14Z-eicosatetraenoyl)-glycerol + ATP = 2-(5Z,8Z,11Z,14Z-eicosatetraenoyl)-sn-glycero-3-phosphate + ADP + H(+). It carries out the reaction 1-(5Z,8Z,11Z,14Z-eicosatetraenoyl)-sn-glycerol + ATP = 1-(5Z,8Z,11Z,14Z-eicosatetraenoyl)-sn-glycero-3-phosphate + ADP + H(+). The catalysed reaction is N-(hexanoyl)sphing-4-enine + ATP = N-hexanoylsphing-4-enine 1-phosphate + ADP + H(+). It functions in the pathway lipid metabolism; glycerolipid metabolism. Functionally, lipid kinase that can phosphorylate both monoacylglycerol and diacylglycerol to form lysophosphatidic acid (LPA) and phosphatidic acid (PA), respectively. Does not phosphorylate sphingosine. Phosphorylates ceramide. Phosphorylates 1,2-dioleoylglycerol more rapidly than 2,3-dioleoylglycerol. Independently of its lipid kinase activity, acts as a component of the TIM22 complex. The TIM22 complex mediates the import and insertion of multi-pass transmembrane proteins into the mitochondrial inner membrane by forming a twin-pore translocase that uses the membrane potential as the external driving force. In the TIM22 complex, required for the import of a subset of metabolite carriers into mitochondria, such as ANT1/SLC25A4 and SLC25A24, while it is not required for the import of TIMM23. Overexpression increases the formation and secretion of LPA, resulting in transactivation of EGFR and activation of the downstream MAPK signaling pathway, leading to increased cell growth. The polypeptide is Acylglycerol kinase, mitochondrial (Homo sapiens (Human)).